The sequence spans 389 residues: Na(+)/H(+) antiporter NhaA (389 aa).

The next 11 membrane-spanning stretches (helical) occupy residues 14-34, 59-79, 95-115, 124-144, 154-174, 177-197, 213-233, 257-277, 292-312, 328-348, and 363-383; these read AGGILLLVAVALAMLMANSPL, LILWINDGLMAVFFLLIGLEV, SLPTFAAIGGMLVPAGVYLLF, AGWAIPAATDIAFALGIMALL, VFLLALAIIDDLGVIVIIALF, TDLSTISLVIASLAIAGLVGL, LILWVAVLKSGVHATLAGVII, PWSTFFILPVFAFANAGVYVG, IALGLMLGKPIGVMVFSYIAV, IAPVAAMCGIGFTMSMFIASL, and LGTLIGSIMAALVGYFWLSKV.

The protein belongs to the NhaA Na(+)/H(+) (TC 2.A.33) antiporter family.

Its subcellular location is the cell inner membrane. The catalysed reaction is Na(+)(in) + 2 H(+)(out) = Na(+)(out) + 2 H(+)(in). Na(+)/H(+) antiporter that extrudes sodium in exchange for external protons. This is Na(+)/H(+) antiporter NhaA from Shewanella baltica (strain OS223).